The sequence spans 565 residues: Oxygen-dependent choline dehydrogenase (565 aa).

Residue 7-36 (DYIICGAGSAGNVLATRLTEDPGVTVLLLE) coordinates FAD. Residue His474 is the Proton acceptor of the active site.

It belongs to the GMC oxidoreductase family. The cofactor is FAD.

It catalyses the reaction choline + A = betaine aldehyde + AH2. The enzyme catalyses betaine aldehyde + NAD(+) + H2O = glycine betaine + NADH + 2 H(+). The protein operates within amine and polyamine biosynthesis; betaine biosynthesis via choline pathway; betaine aldehyde from choline (cytochrome c reductase route): step 1/1. Involved in the biosynthesis of the osmoprotectant glycine betaine. Catalyzes the oxidation of choline to betaine aldehyde and betaine aldehyde to glycine betaine at the same rate. The polypeptide is Oxygen-dependent choline dehydrogenase (Burkholderia pseudomallei (strain 1710b)).